The primary structure comprises 228 residues: MFENLQKAILIRRYKRFLADIELHNGNVLTIYCPNTGAMTGCAEPGDQVWYSTSNNLKRKYKYTWELTFTKGGHWICVNTARANQLVKEALHNSEIEALSGYSQIKAEVKYGTENSRIDFLLSNENKADCYVEVKSCTLLEQPLAEGKGFFPDTVTTRGQKHLRELIEMKQQGHRSVLLFAVLHSGIKSVQAAGHLDVKYAQLFEQAKKAGVEVYCYYPELTLPCLEE.

This sequence belongs to the SfsA family.

The polypeptide is Sugar fermentation stimulation protein homolog (Psychromonas ingrahamii (strain DSM 17664 / CCUG 51855 / 37)).